Reading from the N-terminus, the 247-residue chain is Neurotrophic factor BDNF precursor form (247 aa).

The signal sequence occupies residues 1 to 18 (MTILFLTMVISYFGCMKA). A propeptide spanning residues 19–128 (APMKEASVRG…AANMSMRVRR (110 aa)) is cleaved from the precursor. N121 carries an N-linked (GlcNAc...) asparagine glycan. 3 cysteine pairs are disulfide-bonded: C141/C208, C186/C237, and C196/C239.

This sequence belongs to the NGF-beta family. As to quaternary structure, monomers and homodimers. Binds to NTRK2/TRKB. Can form heterodimers with other neurotrophin family members, such as NTF3 and NTF4 (in vitro), but the physiological relevance of this is not clear. BDNF precursor form: interacts with the heterodimer formed by NGFR and SORCS2. Mature BDNF has much lower affinity for the heterodimer formed by NGFR and SORCS2. N-glycosylated and glycosulfated, contrary to mature BDNF. Post-translationally, mature BDNF is produced by proteolytic removal of the propeptide, catalyzed by a FURIN family member. In addition, the precursor form is proteolytically cleaved within the propeptide, but this is not an obligatory intermediate for the production of mature BDNF. Can be converted into mature BDNF by plasmin (PLG).

Its subcellular location is the secreted. Functionally, important signaling molecule that activates signaling cascades downstream of NTRK2. During development, promotes the survival and differentiation of selected neuronal populations of the peripheral and central nervous systems. Participates in axonal growth, pathfinding and in the modulation of dendritic growth and morphology. Major regulator of synaptic transmission and plasticity at adult synapses in many regions of the CNS. The versatility of BDNF is emphasized by its contribution to a range of adaptive neuronal responses including long-term potentiation (LTP), long-term depression (LTD), certain forms of short-term synaptic plasticity, as well as homeostatic regulation of intrinsic neuronal excitability. In Canis lupus familiaris (Dog), this protein is Neurotrophic factor BDNF precursor form (BDNF).